Reading from the N-terminus, the 90-residue chain is Bombyxin B-3 (90 aa).

The N-terminal stretch at 1–20 (MMKTTIMFMLVVVISLTYSS) is a signal peptide. 3 disulfide bridges follow: Cys-30–Cys-76, Cys-42–Cys-89, and Cys-75–Cys-80. Positions 49 to 67 (SGAQYAPYFWTRQYLGSRG) are cleaved as a propeptide — c peptide like.

The protein belongs to the insulin family. As to quaternary structure, heterodimer of a B chain and an A chain linked by two disulfide bonds.

It localises to the secreted. Its function is as follows. Brain peptide responsible for activation of prothoracic glands to produce ecdysone in insects. In Bombyx mori (Silk moth), this protein is Bombyxin B-3 (BBXB3).